A 482-amino-acid chain; its full sequence is Chromosome stability protein 9 (482 aa).

2 disordered regions span residues 239–263 (SSLRNSSKNNNGTVTPSTSGRVNKN) and 418–482 (SGLA…RRIR). Positions 240-249 (SLRNSSKNNN) are enriched in low complexity. Polar residues predominate over residues 250-263 (GTVTPSTSGRVNKN). Over residues 418 to 437 (SGLAFSSSSNSLQQSKLPKS) the composition is skewed to low complexity. Composition is skewed to polar residues over residues 440–453 (LKRSNSTQQLTNTH) and 463–473 (RSSNTVLGSSK).

As to quaternary structure, component of the synapsis initiation complex composed of at least ZIP2, ZIP3, MSH4 and MSH5. Also interacts with ZIP1, MRE11, RAD51 and RAD53.

It localises to the nucleus. The protein localises to the chromosome. Functionally, component of the synapsis initiation complex (SIC) necessary for the synaptonemal complex assembly. Stabilizes the ZIP2 component to the chromosomes. The SIC complex loads onto chromosomes and nucleates ZIP1 polymerization, a molecular zipper that acts to bring homologous chromosomes in close apposition, which is required for meiotic crossover. May also be involved in double strand break repair. The polypeptide is Chromosome stability protein 9 (CST9) (Saccharomyces cerevisiae (strain ATCC 204508 / S288c) (Baker's yeast)).